A 246-amino-acid polypeptide reads, in one-letter code: Cell division protein ZapD (246 aa).

This sequence belongs to the ZapD family. In terms of assembly, interacts with FtsZ.

It localises to the cytoplasm. Its function is as follows. Cell division factor that enhances FtsZ-ring assembly. Directly interacts with FtsZ and promotes bundling of FtsZ protofilaments, with a reduction in FtsZ GTPase activity. The polypeptide is Cell division protein ZapD (Vibrio vulnificus (strain CMCP6)).